The sequence spans 561 residues: Putative transport protein YbjL (561 aa).

5 helical membrane-spanning segments follow: residues Leu-8–Gly-28, Leu-32–Gln-52, Phe-66–Phe-86, Met-94–Phe-114, and Asn-158–Ala-178. 2 RCK C-terminal domains span residues Arg-200–Asn-288 and Val-292–Phe-373. 5 helical membrane-spanning segments follow: residues Leu-383–Phe-403, Phe-406–Leu-426, Phe-447–Gly-467, Met-475–Ala-495, and Ala-540–Leu-560.

This sequence belongs to the AAE transporter (TC 2.A.81) family. YbjL subfamily.

It localises to the cell membrane. The polypeptide is Putative transport protein YbjL (Salmonella agona (strain SL483)).